The following is a 402-amino-acid chain: Probable tRNA pseudouridine synthase D (402 aa).

The Nucleophile role is filled by Asp94. Residues 175–364 (YILNYYGTQR…PGTRRKLITK (190 aa)) form the TRUD domain.

It belongs to the pseudouridine synthase TruD family.

The enzyme catalyses uridine(13) in tRNA = pseudouridine(13) in tRNA. Functionally, could be responsible for synthesis of pseudouridine from uracil-13 in transfer RNAs. This Methanococcus aeolicus (strain ATCC BAA-1280 / DSM 17508 / OCM 812 / Nankai-3) protein is Probable tRNA pseudouridine synthase D.